The sequence spans 201 residues: Large ribosomal subunit protein uL18 (201 aa).

The protein belongs to the universal ribosomal protein uL18 family. In terms of assembly, part of the 50S ribosomal subunit. Contacts the 5S and 23S rRNAs.

This is one of the proteins that bind and probably mediate the attachment of the 5S RNA into the large ribosomal subunit, where it forms part of the central protuberance. In Thermococcus gammatolerans (strain DSM 15229 / JCM 11827 / EJ3), this protein is Large ribosomal subunit protein uL18.